Consider the following 173-residue polypeptide: Adenine phosphoribosyltransferase (173 aa).

The protein belongs to the purine/pyrimidine phosphoribosyltransferase family. In terms of assembly, homodimer.

Its subcellular location is the cytoplasm. It carries out the reaction AMP + diphosphate = 5-phospho-alpha-D-ribose 1-diphosphate + adenine. It functions in the pathway purine metabolism; AMP biosynthesis via salvage pathway; AMP from adenine: step 1/1. Functionally, catalyzes a salvage reaction resulting in the formation of AMP, that is energically less costly than de novo synthesis. The polypeptide is Adenine phosphoribosyltransferase (Thermoanaerobacter sp. (strain X514)).